The chain runs to 394 residues: Elongation factor Tu (394 aa).

Residues 10–205 (KPHMNVGTIG…SMDNYFDLPE (196 aa)) enclose the tr-type G domain. A G1 region spans residues 19–26 (GHVDHGKT). 19–26 (GHVDHGKT) serves as a coordination point for GTP. Residue Thr26 coordinates Mg(2+). The segment at 61-65 (GITIN) is G2. Residues 82–85 (DCPG) are G3. Residues 82 to 86 (DCPGH) and 137 to 140 (NKLD) each bind GTP. Residues 137 to 140 (NKLD) are G4. The tract at residues 173–175 (SAF) is G5.

Belongs to the TRAFAC class translation factor GTPase superfamily. Classic translation factor GTPase family. EF-Tu/EF-1A subfamily. As to quaternary structure, monomer.

The protein localises to the cytoplasm. The enzyme catalyses GTP + H2O = GDP + phosphate + H(+). In terms of biological role, GTP hydrolase that promotes the GTP-dependent binding of aminoacyl-tRNA to the A-site of ribosomes during protein biosynthesis. In Borreliella burgdorferi (strain ATCC 35210 / DSM 4680 / CIP 102532 / B31) (Borrelia burgdorferi), this protein is Elongation factor Tu.